A 401-amino-acid chain; its full sequence is Phosrestin-1 (401 aa).

S366 is modified (phosphoserine; by CaMK).

It belongs to the arrestin family. In terms of processing, phosphorylated upon light exposure. As to expression, expressed in photoreceptor cells.

The protein localises to the cell projection. Its subcellular location is the rhabdomere. In terms of biological role, regulates photoreceptor cell deactivation. Arr1 and Arr2 proteins are mediators of rhodopsin inactivation and are essential for the termination of the phototransduction cascade. Involved in regulating normal cycles of per nuclear accumulation in brain circadian neurons and thus is important for normal circadian behavior. In the dark, functions with Arr1 to promote the formation of cytosolic Bdbt foci, which are required for dco localization to photoreceptor nuclei where it phosphorylates and activates degradation of per. The sequence is that of Phosrestin-1 (Arr2) from Drosophila melanogaster (Fruit fly).